Reading from the N-terminus, the 366-residue chain is Peptide chain release factor 2 (366 aa).

Position 251 is an N5-methylglutamine (Gln251).

The protein belongs to the prokaryotic/mitochondrial release factor family. Methylated by PrmC. Methylation increases the termination efficiency of RF2.

It localises to the cytoplasm. Functionally, peptide chain release factor 2 directs the termination of translation in response to the peptide chain termination codons UGA and UAA. This chain is Peptide chain release factor 2 (prfB), found in Listeria monocytogenes serovar 1/2a (strain ATCC BAA-679 / EGD-e).